A 616-amino-acid polypeptide reads, in one-letter code: Replication protein A 70 kDa DNA-binding subunit (616 aa).

The residue at position 1 (Met-1) is an N-acetylmethionine. Residues Lys-22 and Lys-88 each participate in a glycyl lysine isopeptide (Lys-Gly) (interchain with G-Cter in ubiquitin) cross-link. The tract at residues 121–154 is disordered; it reads GLGQPQVAPPAPAASPAASSRPQPQNGSSGMGST. The span at 134–145 shows a compositional bias: low complexity; it reads ASPAASSRPQPQ. Lys-163 and Lys-167 each carry N6-acetyllysine; alternate. Glycyl lysine isopeptide (Lys-Gly) (interchain with G-Cter in ubiquitin); alternate cross-links involve residues Lys-163 and Lys-167. Thr-180 carries the phosphothreonine modification. A Glycyl lysine isopeptide (Lys-Gly) (interchain with G-Cter in ubiquitin) cross-link involves residue Lys-183. Residue Thr-191 is modified to Phosphothreonine. A DNA-binding region (OB) is located at residues 197–281; sequence WTICARVTNK…VKNDYEMTFN (85 aa). Residues Lys-220 and Lys-244 each participate in a glycyl lysine isopeptide (Lys-Gly) (interchain with G-Cter in ubiquitin) cross-link. Residue Lys-259 is modified to N6-acetyllysine; alternate. Residue Lys-259 forms a Glycyl lysine isopeptide (Lys-Gly) (interchain with G-Cter in ubiquitin); alternate linkage. Glycyl lysine isopeptide (Lys-Gly) (interchain with G-Cter in ubiquitin) cross-links involve residues Lys-267 and Lys-331. Residue Ser-384 is modified to Phosphoserine. Glycyl lysine isopeptide (Lys-Gly) (interchain with G-Cter in ubiquitin) cross-links involve residues Lys-410 and Lys-431. A Glycyl lysine isopeptide (Lys-Gly) (interchain with G-Cter in SUMO) cross-link involves residue Lys-449. Residue Lys-458 forms a Glycyl lysine isopeptide (Lys-Gly) (interchain with G-Cter in ubiquitin) linkage. Residues 481–503 form a C4-type zinc finger; that stretch reads CPTQDCNKKVIDQQNGLYRCEKC. A Glycyl lysine isopeptide (Lys-Gly) (interchain with G-Cter in ubiquitin) cross-link involves residue Lys-553. Lys-577 participates in a covalent cross-link: Glycyl lysine isopeptide (Lys-Gly) (interchain with G-Cter in SUMO).

Belongs to the replication factor A protein 1 family. As to quaternary structure, component of the canonical replication protein A complex (RPA), a heterotrimer composed of RPA1, RPA2 and RPA3. Also a component of the aRPA, the alternative replication protein A complex, a trimeric complex similar to the replication protein A complex/RPA but where RPA1 and RPA3 are associated with RPA4 instead of RPA2. The DNA-binding activity may reside exclusively on the RPA1 subunit. Interacts with PRPF19; the PRP19-CDC5L complex is recruited to the sites of DNA repair where it ubiquitinates the replication protein A complex (RPA). Interacts with RIPK1. Interacts with the polymerase alpha subunit POLA1/p180; this interaction stabilizes the replicative complex and reduces the misincorporation rate of DNA polymerase alpha by acting as a fidelity clamp. Interacts with RAD51 and SENP6 to regulate DNA repair. Interacts with HELB; this interaction promotes HELB recruitment to chromatin following DNA damage. Interacts with PRIMPOL; leading to recruit PRIMPOL on chromatin and stimulate its DNA primase activity. Interacts with XPA; the interaction is direct and associates XPA with the RPA complex. Interacts with ETAA1; the interaction is direct and promotes ETAA1 recruitment at stalled replication forks. Interacts with RPA1; this interaction associates HROB with the RPA complex. Interacts (when poly-ADP-ribosylated) with HTATSF1. Interacts with BRIP1/FANCJ via this RPA1 subunit; following DNA damage they colocalize in foci in the nucleus. Post-translationally, DNA damage-induced 'Lys-63'-linked polyubiquitination by PRPF19 mediates ATRIP recruitment to the RPA complex at sites of DNA damage and activation of ATR. Ubiquitinated by RFWD3 at stalled replication forks in response to DNA damage: ubiquitination by RFWD3 does not lead to degradation by the proteasome and promotes removal of the RPA complex from stalled replication forks, promoting homologous recombination. Sumoylated on lysine residues Lys-449 and Lys-577, with Lys-449 being the major site. Sumoylation promotes recruitment of RAD51 to the DNA damage foci to initiate DNA repair through homologous recombination. Desumoylated by SENP6. In terms of processing, poly-ADP-ribosylated by PARP1; promoting recruitment of HTATSF1.

Its subcellular location is the nucleus. It localises to the PML body. As part of the heterotrimeric replication protein A complex (RPA/RP-A), binds and stabilizes single-stranded DNA intermediates that form during DNA replication or upon DNA stress. It prevents their reannealing and in parallel, recruits and activates different proteins and complexes involved in DNA metabolism. Thereby, it plays an essential role both in DNA replication and the cellular response to DNA damage. In the cellular response to DNA damage, the RPA complex controls DNA repair and DNA damage checkpoint activation. Through recruitment of ATRIP activates the ATR kinase a master regulator of the DNA damage response. It is required for the recruitment of the DNA double-strand break repair factors RAD51 and RAD52 to chromatin in response to DNA damage. Also recruits to sites of DNA damage proteins like XPA and XPG that are involved in nucleotide excision repair and is required for this mechanism of DNA repair. Also plays a role in base excision repair (BER) probably through interaction with UNG. Also recruits SMARCAL1/HARP, which is involved in replication fork restart, to sites of DNA damage. Plays a role in telomere maintenance. As part of the alternative replication protein A complex, aRPA, binds single-stranded DNA and probably plays a role in DNA repair. Compared to the RPA2-containing, canonical RPA complex, may not support chromosomal DNA replication and cell cycle progression through S-phase. The aRPA may not promote efficient priming by DNA polymerase alpha but could support DNA synthesis by polymerase delta in presence of PCNA and replication factor C (RFC), the dual incision/excision reaction of nucleotide excision repair and RAD51-dependent strand exchange. RPA stimulates 5'-3' helicase activity of the BRIP1/FANCJ. The sequence is that of Replication protein A 70 kDa DNA-binding subunit (RPA1) from Homo sapiens (Human).